The sequence spans 73 residues: UPF0154 protein PEPE_0872 (73 aa).

A helical membrane pass occupies residues 5 to 25 (IWIMIVIIALLVGAVGGFFFA).

Belongs to the UPF0154 family.

It is found in the cell membrane. This chain is UPF0154 protein PEPE_0872, found in Pediococcus pentosaceus (strain ATCC 25745 / CCUG 21536 / LMG 10740 / 183-1w).